Consider the following 162-residue polypeptide: Large ribosomal subunit protein uL10 (162 aa).

Belongs to the universal ribosomal protein uL10 family. In terms of assembly, part of the ribosomal stalk of the 50S ribosomal subunit. The N-terminus interacts with L11 and the large rRNA to form the base of the stalk. The C-terminus forms an elongated spine to which L12 dimers bind in a sequential fashion forming a multimeric L10(L12)X complex.

In terms of biological role, forms part of the ribosomal stalk, playing a central role in the interaction of the ribosome with GTP-bound translation factors. The sequence is that of Large ribosomal subunit protein uL10 from Vibrio parahaemolyticus serotype O3:K6 (strain RIMD 2210633).